The following is a 448-amino-acid chain: Antilisterial bacteriocin subtilosin biosynthesis protein AlbA (448 aa).

The 215-residue stretch at 115 to 329 (FPMPLHATFE…EQHVIDEFKD (215 aa)) folds into the Radical SAM core domain. Residues cysteine 129, cysteine 133, cysteine 136, cysteine 408, cysteine 414, and cysteine 417 each coordinate [4Fe-4S] cluster.

Requires [4Fe-4S] cluster as cofactor.

Its subcellular location is the cytoplasm. Catalyzes the formation of 3 thioether bonds during production of the sactipeptide subtilosin from SboA. In vitro the thioether bonds cannot be made in the absence of the SboA propeptide, suggesting this is the first reaction in subtilosin maturation. In vitro, in the absence of a second substrate, cleaves S-adenosyl-L-methionine into Met and 5'-dA. The sequence is that of Antilisterial bacteriocin subtilosin biosynthesis protein AlbA (albA) from Bacillus subtilis (strain 168).